Reading from the N-terminus, the 202-residue chain is Imidazoleglycerol-phosphate dehydratase (202 aa).

This sequence belongs to the imidazoleglycerol-phosphate dehydratase family.

It is found in the cytoplasm. It catalyses the reaction D-erythro-1-(imidazol-4-yl)glycerol 3-phosphate = 3-(imidazol-4-yl)-2-oxopropyl phosphate + H2O. Its pathway is amino-acid biosynthesis; L-histidine biosynthesis; L-histidine from 5-phospho-alpha-D-ribose 1-diphosphate: step 6/9. This is Imidazoleglycerol-phosphate dehydratase from Corynebacterium diphtheriae (strain ATCC 700971 / NCTC 13129 / Biotype gravis).